Consider the following 196-residue polypeptide: Peptide methionine sulfoxide reductase (196 aa).

Polar residues predominate over residues M1–P14. Positions M1–P23 are disordered.

The protein belongs to the MsrA Met sulfoxide reductase family.

It carries out the reaction L-methionyl-[protein] + [thioredoxin]-disulfide + H2O = L-methionyl-(S)-S-oxide-[protein] + [thioredoxin]-dithiol. The enzyme catalyses [thioredoxin]-disulfide + L-methionine + H2O = L-methionine (S)-S-oxide + [thioredoxin]-dithiol. Its function is as follows. Has an important function as a repair enzyme for proteins that have been inactivated by oxidation. Catalyzes the reversible oxidation-reduction of methionine sulfoxide in proteins to methionine. The protein is Peptide methionine sulfoxide reductase (E4) of Solanum lycopersicum (Tomato).